Reading from the N-terminus, the 82-residue chain is Small ribosomal subunit protein bS18 (82 aa).

Residues 1–20 form a disordered region; the sequence is MVDINQIPTRRPFHRRRKTC.

It belongs to the bacterial ribosomal protein bS18 family. Part of the 30S ribosomal subunit. Forms a tight heterodimer with protein bS6.

Functionally, binds as a heterodimer with protein bS6 to the central domain of the 16S rRNA, where it helps stabilize the platform of the 30S subunit. This is Small ribosomal subunit protein bS18 from Brucella abortus (strain 2308).